The following is a 189-amino-acid chain: Probable pericyclase scpY (189 aa).

This sequence belongs to the pericyclase pydY family.

The protein operates within mycotoxin biosynthesis. Its function is as follows. Probable pericyclase; part of the gene scp cluster that mediates the biosynthesis of a hirsutellone-like compound that has still to be identified. This Mollisia scopiformis (Conifer needle endophyte fungus) protein is Probable pericyclase scpY.